The sequence spans 247 residues: tRNA (guanine-N(1)-)-methyltransferase (247 aa).

S-adenosyl-L-methionine-binding positions include Gly115 and 134-139 (IGDFVL).

Belongs to the RNA methyltransferase TrmD family. As to quaternary structure, homodimer.

It is found in the cytoplasm. The catalysed reaction is guanosine(37) in tRNA + S-adenosyl-L-methionine = N(1)-methylguanosine(37) in tRNA + S-adenosyl-L-homocysteine + H(+). Specifically methylates guanosine-37 in various tRNAs. This chain is tRNA (guanine-N(1)-)-methyltransferase, found in Anaeromyxobacter dehalogenans (strain 2CP-C).